The primary structure comprises 424 residues: DNA repair protein Rad60 (424 aa).

Y26 carries the phosphotyrosine modification. S32 and S34 each carry phosphoserine. The interval L45–S177 is disordered. Positions K48–N57 are enriched in basic residues. A compositionally biased stretch (basic and acidic residues) spans Q77–R93. At S96 the chain carries Phosphoserine. Residues E104–D123 show a composition bias toward basic and acidic residues. Over residues K156–T166 the composition is skewed to basic residues. A compositionally biased stretch (low complexity) spans S167–S177.

As to quaternary structure, forms a complex with dgrn; likely required for localization to the nuclear periphery. Interacts with the SMC5-SMC6 complex members SMC5 and SMC6/jnj following ionizing radiation (IR) to induce DNA damage. Interaction between the SMC5-SMC6 complex and the dgrn-Rad60 complex, may stabilize the association of heterochromatic DSBs with the nuclear periphery.

The protein resides in the nucleus. It is found in the nucleoplasm. In terms of biological role, required for repair of DNA double strand breaks which occur during replication or are induced by ionizing radiation (IR). Functions with dgrn and downstream of the SMC5-SMC6 complex to regulate strand break repair. Likely functions by stabilizing the association of heterochromatic double strand breaks (DSBs) with the nuclear periphery as part of the homologous recombination (HR) repair process. The chain is DNA repair protein Rad60 from Drosophila melanogaster (Fruit fly).